A 698-amino-acid polypeptide reads, in one-letter code: Elongation factor G 1 (698 aa).

The 283-residue stretch at 8 to 290 (ERYRNIGICA…AVVEFLPAPV (283 aa)) folds into the tr-type G domain. GTP-binding positions include 17–24 (AHVDAGKT), 88–92 (DTPGH), and 142–145 (NKMD).

Belongs to the TRAFAC class translation factor GTPase superfamily. Classic translation factor GTPase family. EF-G/EF-2 subfamily.

Its subcellular location is the cytoplasm. Functionally, catalyzes the GTP-dependent ribosomal translocation step during translation elongation. During this step, the ribosome changes from the pre-translocational (PRE) to the post-translocational (POST) state as the newly formed A-site-bound peptidyl-tRNA and P-site-bound deacylated tRNA move to the P and E sites, respectively. Catalyzes the coordinated movement of the two tRNA molecules, the mRNA and conformational changes in the ribosome. The polypeptide is Elongation factor G 1 (Shewanella sp. (strain MR-4)).